The chain runs to 235 residues: Elongation factor Tu, chloroplastic (235 aa).

In terms of domain architecture, tr-type G spans 1 to 125 (KNMITGAAQM…KVDSYIPTPQ (125 aa)). 47–50 (NKED) contacts GTP.

This sequence belongs to the TRAFAC class translation factor GTPase superfamily. Classic translation factor GTPase family. EF-Tu/EF-1A subfamily.

The protein resides in the plastid. It localises to the chloroplast. It carries out the reaction GTP + H2O = GDP + phosphate + H(+). GTP hydrolase that promotes the GTP-dependent binding of aminoacyl-tRNA to the A-site of ribosomes during protein biosynthesis. This chain is Elongation factor Tu, chloroplastic (tufA), found in Gonium pectorale (Green alga).